A 177-amino-acid polypeptide reads, in one-letter code: MIIIDGKNYACVVCLRGHRGSSCQHQERALIEVRTRGRPLLCKKCRAIKQQLKSNLKCVCHLQPFLPFANEYQELLNFTQKNPILASLFLFSTDKDIMNSSLNPASQAYTFDLGRTLPISEDILGYRKPLSLTDASNRIDASQLNEKENDSFTINQEADIFNFAKYLHSKDDISGIP.

A DNA-binding region (copper-fist) is located at residues 1–40 (MIIIDGKNYACVVCLRGHRGSSCQHQERALIEVRTRGRPL). The Zn(2+) site is built by Cys-11, Cys-14, Cys-23, and His-25.

The protein localises to the nucleus. This chain is Copper-binding regulatory protein cuf2 (cuf2), found in Schizosaccharomyces pombe (strain 972 / ATCC 24843) (Fission yeast).